We begin with the raw amino-acid sequence, 153 residues long: SsrA-binding protein (153 aa).

The disordered stretch occupies residues 131 to 153 (EYDKRDSIRERDDRREMDRAFKR).

Belongs to the SmpB family.

It is found in the cytoplasm. In terms of biological role, required for rescue of stalled ribosomes mediated by trans-translation. Binds to transfer-messenger RNA (tmRNA), required for stable association of tmRNA with ribosomes. tmRNA and SmpB together mimic tRNA shape, replacing the anticodon stem-loop with SmpB. tmRNA is encoded by the ssrA gene; the 2 termini fold to resemble tRNA(Ala) and it encodes a 'tag peptide', a short internal open reading frame. During trans-translation Ala-aminoacylated tmRNA acts like a tRNA, entering the A-site of stalled ribosomes, displacing the stalled mRNA. The ribosome then switches to translate the ORF on the tmRNA; the nascent peptide is terminated with the 'tag peptide' encoded by the tmRNA and targeted for degradation. The ribosome is freed to recommence translation, which seems to be the essential function of trans-translation. This chain is SsrA-binding protein, found in Parabacteroides distasonis (strain ATCC 8503 / DSM 20701 / CIP 104284 / JCM 5825 / NCTC 11152).